The sequence spans 697 residues: Putative ATP-dependent RNA helicase an3 (697 aa).

The tract at residues 27-189 (ESGVAGTKGR…PLAPNDRVEQ (163 aa)) is disordered. Composition is skewed to basic and acidic residues over residues 89–111 (GRSDRGFYDRENSGWNSGRDKDA), 135–144 (RRTDDRRQDG), and 151–170 (RSDKSGFGRFDRGNSRWSDD). A Q motif motif is present at residues 221 to 249 (ESFHDVTMGEIIMGNIQLTRYTRPTPVQK). Residues 241–248 (YTRPTPVQ) and 265–272 (AQTGSGKT) contribute to the ATP site. The Helicase ATP-binding domain occupies 252-444 (IPIIIEKRDL…RDFLDEYIFL (193 aa)). The DEAD box motif lies at 388-391 (DEAD). The region spanning 455–616 (NITQKVVWVE…EVPSWLENMA (162 aa)) is the Helicase C-terminal domain. Residues 619–666 (QHHKSSSRGRSKSRFSGGFGAKDYRQSSGAGSSFGSSRGGRSSGHGGS) form a disordered region. The segment covering 622–631 (KSSSRGRSKS) has biased composition (basic residues). The segment covering 645 to 654 (SSGAGSSFGS) has biased composition (low complexity). Over residues 655–666 (SRGGRSSGHGGS) the composition is skewed to gly residues.

It belongs to the DEAD box helicase family. DDX3/DED1 subfamily.

The protein localises to the cell membrane. It localises to the nucleus. The protein resides in the cytoplasm. It is found in the stress granule. Its subcellular location is the inflammasome. The protein localises to the cell projection. It localises to the lamellipodium. It carries out the reaction ATP + H2O = ADP + phosphate + H(+). Its function is as follows. Multifunctional ATP-dependent RNA helicase. The ATPase activity can be stimulated by various ribo-and deoxynucleic acids indicative for a relaxed substrate specificity. In vitro can unwind partially double-stranded DNA with a preference for 5'-single-stranded DNA overhangs. Involved in many cellular processes, which do not necessarily require its ATPase/helicase catalytic activities. Involved in the regulation of transcription and translation initiation. Involved in innate immunity. Involved in both stress and inflammatory responses. May negatively regulate extrinsic apoptotic signaling pathway via death domain receptors. May be involved in mitotic chromosome segregation. Required for canonical Wnt signaling involved in anteroposterior neural patterning. This chain is Putative ATP-dependent RNA helicase an3 (an3), found in Xenopus laevis (African clawed frog).